The following is a 513-amino-acid chain: ATP synthase subunit alpha (513 aa).

Position 169-176 (169-176 (GDRQTGKT)) interacts with ATP.

This sequence belongs to the ATPase alpha/beta chains family. F-type ATPases have 2 components, CF(1) - the catalytic core - and CF(0) - the membrane proton channel. CF(1) has five subunits: alpha(3), beta(3), gamma(1), delta(1), epsilon(1). CF(0) has three main subunits: a(1), b(2) and c(9-12). The alpha and beta chains form an alternating ring which encloses part of the gamma chain. CF(1) is attached to CF(0) by a central stalk formed by the gamma and epsilon chains, while a peripheral stalk is formed by the delta and b chains.

It is found in the cell inner membrane. The catalysed reaction is ATP + H2O + 4 H(+)(in) = ADP + phosphate + 5 H(+)(out). Produces ATP from ADP in the presence of a proton gradient across the membrane. The alpha chain is a regulatory subunit. The chain is ATP synthase subunit alpha from Ruthia magnifica subsp. Calyptogena magnifica.